A 234-amino-acid chain; its full sequence is Toxic shock syndrome toxin-1 (234 aa).

A signal peptide spans 1–40 (MNKKLLMNFFIVSPLLLATTATDFTPVPLSSNQIIKTAKA).

Belongs to the staphylococcal/streptococcal toxin family.

It is found in the secreted. Its function is as follows. Responsible for the symptoms of toxic shock syndrome. The sequence is that of Toxic shock syndrome toxin-1 (tst) from Staphylococcus aureus.